The chain runs to 201 residues: 5'(3')-deoxyribonucleotidase, cytosolic type (201 aa).

D10 serves as the catalytic Nucleophile. Residues D10 and D12 each contribute to the Mg(2+) site. The Proton donor role is filled by D12. 5 residues coordinate substrate: F18, F44, Y65, T99, and K134. Residue D145 coordinates Mg(2+). Position 182 is a phosphoserine (S182).

The protein belongs to the 5'(3')-deoxyribonucleotidase family. Homodimer. The cofactor is Mg(2+). In terms of tissue distribution, detected in skeletal muscle, heart and pancreas.

The protein resides in the cytoplasm. Its function is as follows. Dephosphorylates the 5' and 2'(3')-phosphates of deoxyribonucleotides, with a preference for dUMP and dTMP, intermediate activity towards dGMP, and low activity towards dCMP and dAMP. This is 5'(3')-deoxyribonucleotidase, cytosolic type (NT5C) from Homo sapiens (Human).